Reading from the N-terminus, the 378-residue chain is MTYRPATDGPDLASLTLGVEEEFLLLDAETGESMPVAARVLDGLSGVAHAQSRREFRHSMVEMVTPVLSDLAELRRHLVALRTAAADAAEAAGARLVAVGATPVNETHRTVPDEPRYHAMSRRFGPVAHDPAVCGCHVHVGLPDRELAVQVCNHLRPWLPVVQAITANSPLHDGQDTGHASWRAMQLERWPSIGPTPYFDSAADYDATVADLIKAGIMLDAGMVYWYVRPSAAYPTVEIRVGDVCPTVDDTVLVAGLVRALVATVAADVHDGARAPRIRGCLLSAAHWRAAHDGLDGDLVDLRTGRARPAWDLVDDLFALVTPALERQGDRAYVRDQLARVRAEGTGAVRQRRILDRSACDVRAVLDHLAAQTRPAPV.

This sequence belongs to the glutamate--cysteine ligase type 2 family. YbdK subfamily.

It carries out the reaction L-cysteine + L-glutamate + ATP = gamma-L-glutamyl-L-cysteine + ADP + phosphate + H(+). Its function is as follows. ATP-dependent carboxylate-amine ligase which exhibits weak glutamate--cysteine ligase activity. The polypeptide is Putative glutamate--cysteine ligase 2 (Salinispora arenicola (strain CNS-205)).